Here is a 433-residue protein sequence, read N- to C-terminus: MAQFYSAKRRTTTRQIITVSVNDLDSFGQGVARHNGKTLFIPGLLPQENAEVTVTEDKKQYARAKVVRRLSDSPERETPRCPHFGVCGGCQQQHASVDLQQRSKSAALARLMKHEVSEVIADVPWGYRRRARLSLNYLPKTQQLQMGFRKAGSSDIVDVKQCPILVPQLEALLPKVRACLGSLQAMRHLGHVELVQATSGTLMILRHTAPLSSADREKLECFSHSEGLDLYLAPDSEILETVSGEMPWYDSNGLRLTFSPRDFIQVNAGVNQKMVARALEWLDVEPEDCVLDLFCGMGNFTLPLATQAASVVGVEGVPALVEKGQQNARLNGLQNVTFYHENLEEDVTKQPWAKNGFDKVLLDPARAGAAGVMQQIIKLEPIRIVYVSCNPATLARDSEALLKAGYTIARLAMLDMFPHTGHLESMVLFSRVK.

A TRAM domain is found at 10–68; the sequence is RTTTRQIITVSVNDLDSFGQGVARHNGKTLFIPGLLPQENAEVTVTEDKKQYARAKVVR. [4Fe-4S] cluster contacts are provided by Cys-81, Cys-87, Cys-90, and Cys-162. The S-adenosyl-L-methionine site is built by Gln-265, Phe-294, Asn-299, Glu-315, Asn-342, and Asp-363. The active-site Nucleophile is Cys-389.

Belongs to the class I-like SAM-binding methyltransferase superfamily. RNA M5U methyltransferase family. RlmD subfamily.

The catalysed reaction is uridine(1939) in 23S rRNA + S-adenosyl-L-methionine = 5-methyluridine(1939) in 23S rRNA + S-adenosyl-L-homocysteine + H(+). In terms of biological role, catalyzes the formation of 5-methyl-uridine at position 1939 (m5U1939) in 23S rRNA. The sequence is that of 23S rRNA (uracil(1939)-C(5))-methyltransferase RlmD from Escherichia coli (strain UTI89 / UPEC).